Reading from the N-terminus, the 455-residue chain is Venom prothrombin activator notecarin-D1 (455 aa).

A signal peptide spans 1-20; that stretch reads MAPQLLLCLILTFLWSLPEA. Positions 21–40 are excised as a propeptide; that stretch reads ESNVFLKSKVANRFLQRTKR. The 46-residue stretch at 41–86 folds into the Gla domain; sequence SNSLFEEIRPGNIERECIEEKCSKEEAREVFEDNEKTETFWNVYVD. A 4-carboxyglutamate mark is found at Glu46, Glu47, Glu54, Glu56, Glu59, Glu60, Glu65, Glu66, Glu69, Glu72, and Glu75. Residues Cys57 and Cys62 are joined by a disulfide bond. An EGF-like 1; calcium-binding domain is found at 86–122; the sequence is DGDQCSSNPCHYRGTCKDGIGSYTCTCLPNYEGKNCE. Disulfide bonds link Cys90–Cys101, Cys95–Cys110, Cys112–Cys121, Cys129–Cys140, Cys136–Cys149, Cys151–Cys164, Cys172–Cys328, Cys216–Cys221, Cys236–Cys252, Cys376–Cys390, and Cys401–Cys429. An O-linked (Hex...) serine glycan is attached at Ser92. The EGF-like 2 domain maps to 129-164; sequence CRVDNGNCWHFCKRVQSETQCSCAESYRLGVDGHSC. A propeptide spans 182–209 (activation peptide); the sequence is REASLPDFVQSQKATLLKKSDNPSPDIR. The Peptidase S1 domain maps to 210–453; the sequence is IVNGMDCKLG…FIPWIKKIMS (244 aa). The Charge relay system role is filled by His251. N-linked (GlcNAc...) asparagine glycosylation occurs at Asn254. Asp308 acts as the Charge relay system in catalysis. Ser405 (charge relay system) is an active-site residue.

Belongs to the peptidase S1 family. Snake venom subfamily. As to quaternary structure, heterodimer of a light chain and a heavy chain; disulfide-linked. Post-translationally, gamma-carboxyglutamate residues are formed by vitamin K dependent carboxylation. These residues are essential for the binding of calcium. Expressed by the venom gland.

It is found in the secreted. The catalysed reaction is Selective cleavage of Arg-|-Thr and then Arg-|-Ile bonds in prothrombin to form thrombin.. In terms of biological role, snake prothrombin activator that attacks the hemostatic system of prey. This protein is functionally similar to blood coagulation factor Xa. This chain is Venom prothrombin activator notecarin-D1, found in Notechis scutatus scutatus (Mainland tiger snake).